We begin with the raw amino-acid sequence, 283 residues long: Thymidylate synthase (283 aa).

Arg22 serves as a coordination point for dUMP. The active-site Nucleophile is the Cys160. DUMP contacts are provided by residues 180–183, Asn191, and 221–223; these read RSCD and HIY. Asp183 serves as a coordination point for (6R)-5,10-methylene-5,6,7,8-tetrahydrofolate. Position 282 (Ser282) interacts with (6R)-5,10-methylene-5,6,7,8-tetrahydrofolate.

The protein belongs to the thymidylate synthase family. Bacterial-type ThyA subfamily. As to quaternary structure, homodimer.

It is found in the cytoplasm. The enzyme catalyses dUMP + (6R)-5,10-methylene-5,6,7,8-tetrahydrofolate = 7,8-dihydrofolate + dTMP. It functions in the pathway pyrimidine metabolism; dTTP biosynthesis. Functionally, catalyzes the reductive methylation of 2'-deoxyuridine-5'-monophosphate (dUMP) to 2'-deoxythymidine-5'-monophosphate (dTMP) while utilizing 5,10-methylenetetrahydrofolate (mTHF) as the methyl donor and reductant in the reaction, yielding dihydrofolate (DHF) as a by-product. This enzymatic reaction provides an intracellular de novo source of dTMP, an essential precursor for DNA biosynthesis. The chain is Thymidylate synthase from Histophilus somni (strain 129Pt) (Haemophilus somnus).